Consider the following 355-residue polypeptide: UDP-N-acetylglucosamine--N-acetylmuramyl-(pentapeptide) pyrophosphoryl-undecaprenol N-acetylglucosamine transferase (355 aa).

UDP-N-acetyl-alpha-D-glucosamine is bound by residues 15-17, Asn127, Arg163, Ser191, Ile244, 263-268, and Gln288; these read TGG and ALTVSE.

It belongs to the glycosyltransferase 28 family. MurG subfamily.

The protein resides in the cell inner membrane. It catalyses the reaction di-trans,octa-cis-undecaprenyl diphospho-N-acetyl-alpha-D-muramoyl-L-alanyl-D-glutamyl-meso-2,6-diaminopimeloyl-D-alanyl-D-alanine + UDP-N-acetyl-alpha-D-glucosamine = di-trans,octa-cis-undecaprenyl diphospho-[N-acetyl-alpha-D-glucosaminyl-(1-&gt;4)]-N-acetyl-alpha-D-muramoyl-L-alanyl-D-glutamyl-meso-2,6-diaminopimeloyl-D-alanyl-D-alanine + UDP + H(+). The protein operates within cell wall biogenesis; peptidoglycan biosynthesis. Functionally, cell wall formation. Catalyzes the transfer of a GlcNAc subunit on undecaprenyl-pyrophosphoryl-MurNAc-pentapeptide (lipid intermediate I) to form undecaprenyl-pyrophosphoryl-MurNAc-(pentapeptide)GlcNAc (lipid intermediate II). The sequence is that of UDP-N-acetylglucosamine--N-acetylmuramyl-(pentapeptide) pyrophosphoryl-undecaprenol N-acetylglucosamine transferase from Salmonella arizonae (strain ATCC BAA-731 / CDC346-86 / RSK2980).